The chain runs to 72 residues: Cell division protein ZapB (72 aa).

Positions 2–72 (SLEILDQLEG…RSLLGQIDNV (71 aa)) form a coiled coil. Positions 34-57 (NQQAQQANDELRSENEQLKGEHNN) are disordered. Residues 42 to 57 (DELRSENEQLKGEHNN) show a composition bias toward basic and acidic residues.

It belongs to the ZapB family. Homodimer. The ends of the coiled-coil dimer bind to each other, forming polymers. Interacts with FtsZ.

It is found in the cytoplasm. In terms of biological role, non-essential, abundant cell division factor that is required for proper Z-ring formation. It is recruited early to the divisome by direct interaction with FtsZ, stimulating Z-ring assembly and thereby promoting cell division earlier in the cell cycle. Its recruitment to the Z-ring requires functional FtsA or ZipA. This Mannheimia succiniciproducens (strain KCTC 0769BP / MBEL55E) protein is Cell division protein ZapB.